The following is a 292-amino-acid chain: uncharacterized protein (292 aa).

The N-terminal stretch at 1 to 21 (MNSNSNKKRDPARFPAGVAQG) is a signal peptide. Residues 1 to 30 (MNSNSNKKRDPARFPAGVAQGCSTTRAGDL) form a disordered region.

This is an uncharacterized protein from Treponema pallidum (strain Nichols).